The primary structure comprises 168 residues: Photosystem I assembly protein Ycf3 (168 aa).

3 TPR repeats span residues 35 to 68 (AFTYYRDGMSAQSEGNYAEALQNYYEAMRLEIDP), 72 to 105 (SYILYNIGLIHTSNGEHTKALEYYFRALERNPFL), and 120 to 153 (GEQAIRQGDSEIAEAWFDQAAEYWKQAIALTPGN).

The protein belongs to the Ycf3 family.

It is found in the plastid. The protein localises to the chloroplast thylakoid membrane. Its function is as follows. Essential for the assembly of the photosystem I (PSI) complex. May act as a chaperone-like factor to guide the assembly of the PSI subunits. This Helianthus annuus (Common sunflower) protein is Photosystem I assembly protein Ycf3.